Consider the following 184-residue polypeptide: Large ribosomal subunit protein bL9 (184 aa).

A disordered region spans residues 160 to 184 (LQNQKSEQQEAEQDANKEAADGDDS). The span at 173 to 184 (DANKEAADGDDS) shows a compositional bias: basic and acidic residues.

The protein belongs to the bacterial ribosomal protein bL9 family.

In terms of biological role, binds to the 23S rRNA. The sequence is that of Large ribosomal subunit protein bL9 from Wolbachia sp. subsp. Drosophila simulans (strain wRi).